The chain runs to 1184 residues: DNA-directed RNA polymerase subunit beta' (1184 aa).

Residues Cys-60, Cys-62, Cys-75, and Cys-78 each coordinate Zn(2+). Mg(2+)-binding residues include Asp-449, Asp-451, and Asp-453. Zn(2+)-binding residues include Cys-794, Cys-867, Cys-874, and Cys-877.

This sequence belongs to the RNA polymerase beta' chain family. In terms of assembly, the RNAP catalytic core consists of 2 alpha, 1 beta, 1 beta' and 1 omega subunit. When a sigma factor is associated with the core the holoenzyme is formed, which can initiate transcription. The cofactor is Mg(2+). Requires Zn(2+) as cofactor.

The enzyme catalyses RNA(n) + a ribonucleoside 5'-triphosphate = RNA(n+1) + diphosphate. In terms of biological role, DNA-dependent RNA polymerase catalyzes the transcription of DNA into RNA using the four ribonucleoside triphosphates as substrates. The polypeptide is DNA-directed RNA polymerase subunit beta' (Thermoanaerobacter sp. (strain X514)).